A 400-amino-acid polypeptide reads, in one-letter code: Diphosphomevalonate decarboxylase (400 aa).

Position 2 is an N-acetylalanine (Ala-2). (R)-5-diphosphomevalonate is bound by residues 23 to 26 (YWGK) and Arg-78. Residue Ser-96 is modified to Phosphoserine. Residues 156–161 (SGSACR) and Thr-212 contribute to the (R)-5-diphosphomevalonate site.

It belongs to the diphosphomevalonate decarboxylase family. Homodimer. In terms of tissue distribution, expressed in heart, skeletal muscle, lung, liver, brain, pancreas, kidney and placenta.

It localises to the cytoplasm. It catalyses the reaction (R)-5-diphosphomevalonate + ATP = isopentenyl diphosphate + ADP + phosphate + CO2. The protein operates within steroid biosynthesis; cholesterol biosynthesis. Functionally, catalyzes the ATP dependent decarboxylation of (R)-5-diphosphomevalonate to form isopentenyl diphosphate (IPP). Functions in the mevalonate (MVA) pathway leading to isopentenyl diphosphate (IPP), a key precursor for the biosynthesis of isoprenoids and sterol synthesis. The sequence is that of Diphosphomevalonate decarboxylase (MVD) from Homo sapiens (Human).